We begin with the raw amino-acid sequence, 417 residues long: Serine hydroxymethyltransferase (417 aa).

Residues leucine 122 and 126–128 (GHL) each bind (6S)-5,6,7,8-tetrahydrofolate. Lysine 230 carries the N6-(pyridoxal phosphate)lysine modification. 355–357 (SPF) lines the (6S)-5,6,7,8-tetrahydrofolate pocket.

This sequence belongs to the SHMT family. As to quaternary structure, homodimer. It depends on pyridoxal 5'-phosphate as a cofactor.

The protein localises to the cytoplasm. The catalysed reaction is (6R)-5,10-methylene-5,6,7,8-tetrahydrofolate + glycine + H2O = (6S)-5,6,7,8-tetrahydrofolate + L-serine. Its pathway is one-carbon metabolism; tetrahydrofolate interconversion. The protein operates within amino-acid biosynthesis; glycine biosynthesis; glycine from L-serine: step 1/1. In terms of biological role, catalyzes the reversible interconversion of serine and glycine with tetrahydrofolate (THF) serving as the one-carbon carrier. This reaction serves as the major source of one-carbon groups required for the biosynthesis of purines, thymidylate, methionine, and other important biomolecules. Also exhibits THF-independent aldolase activity toward beta-hydroxyamino acids, producing glycine and aldehydes, via a retro-aldol mechanism. This Francisella philomiragia subsp. philomiragia (strain ATCC 25017 / CCUG 19701 / FSC 153 / O#319-036) protein is Serine hydroxymethyltransferase.